Reading from the N-terminus, the 230-residue chain is 3,4-dihydroxy-2-butanone 4-phosphate synthase (230 aa).

D-ribulose 5-phosphate contacts are provided by residues 42–43, Asp-47, 155–159, and Glu-179; these read RE and RRGHT. A Mg(2+)-binding site is contributed by Glu-43. His-158 contributes to the Mg(2+) binding site.

Belongs to the DHBP synthase family. In terms of assembly, homodimer. Mg(2+) serves as cofactor. Mn(2+) is required as a cofactor.

It carries out the reaction D-ribulose 5-phosphate = (2S)-2-hydroxy-3-oxobutyl phosphate + formate + H(+). Its pathway is cofactor biosynthesis; riboflavin biosynthesis; 2-hydroxy-3-oxobutyl phosphate from D-ribulose 5-phosphate: step 1/1. Functionally, catalyzes the conversion of D-ribulose 5-phosphate to formate and 3,4-dihydroxy-2-butanone 4-phosphate. The protein is 3,4-dihydroxy-2-butanone 4-phosphate synthase of Bordetella bronchiseptica (strain ATCC BAA-588 / NCTC 13252 / RB50) (Alcaligenes bronchisepticus).